The sequence spans 158 residues: Small ribosomal subunit protein bS6 (158 aa).

Residues 98-158 (EAPSAPLARR…DRDEDQNEEN (61 aa)) are disordered. 2 stretches are compositionally biased toward basic and acidic residues: residues 106-117 (RRGEDRDRDRGF) and 127-150 (DSGRRRGADDREEYRARDEYRSDR).

Belongs to the bacterial ribosomal protein bS6 family.

Its function is as follows. Binds together with bS18 to 16S ribosomal RNA. In Acidiphilium cryptum (strain JF-5), this protein is Small ribosomal subunit protein bS6.